We begin with the raw amino-acid sequence, 156 residues long: Small ribosomal subunit protein uS7 (156 aa).

It belongs to the universal ribosomal protein uS7 family. As to quaternary structure, part of the 30S ribosomal subunit. Contacts proteins S9 and S11.

Functionally, one of the primary rRNA binding proteins, it binds directly to 16S rRNA where it nucleates assembly of the head domain of the 30S subunit. Is located at the subunit interface close to the decoding center, probably blocks exit of the E-site tRNA. The protein is Small ribosomal subunit protein uS7 of Desulfovibrio desulfuricans (strain ATCC 27774 / DSM 6949 / MB).